The sequence spans 450 residues: Phosphoglucosamine mutase (450 aa).

Ser101 serves as the catalytic Phosphoserine intermediate. Mg(2+)-binding residues include Ser101, Asp242, Asp244, and Asp246. Ser101 carries the post-translational modification Phosphoserine.

Belongs to the phosphohexose mutase family. Requires Mg(2+) as cofactor. In terms of processing, activated by phosphorylation.

It catalyses the reaction alpha-D-glucosamine 1-phosphate = D-glucosamine 6-phosphate. In terms of biological role, catalyzes the conversion of glucosamine-6-phosphate to glucosamine-1-phosphate. This chain is Phosphoglucosamine mutase, found in Rhodopseudomonas palustris (strain ATCC BAA-98 / CGA009).